The following is a 205-amino-acid chain: DNA-directed RNA polymerase RPB5 homolog (205 aa).

This sequence belongs to the archaeal RpoH/eukaryotic RPB5 RNA polymerase subunit family. In terms of assembly, part of the viral DNA-directed RNA polymerase that consists of 8 polII-like subunits (RPB1, RPB2, RPB3, RPB5, RPB6, RPB7, RPB9, RPB10), a capping enzyme and a termination factor.

Its subcellular location is the host cytoplasm. The protein localises to the virion. Functionally, component of the DNA-directed RNA polymerase (RNAP) that catalyzes the transcription in the cytoplasm of viral DNA into RNA using the four ribonucleoside triphosphates as substrates. In Ornithodoros (relapsing fever ticks), this protein is DNA-directed RNA polymerase RPB5 homolog.